The following is a 227-amino-acid chain: ATP synthase F(0) complex subunit a (227 aa).

6 helical membrane-spanning segments follow: residues 14 to 34, 69 to 89, 98 to 118, 139 to 159, 174 to 194, and 196 to 216; these read LLGIPLILLSLLFPTLLLPSP, WALILTSLMTFLLLINLLGLL, QLSMNMALAFPLWLATLLTGL, IPALILIETTSLLIRPLALGV, LISTATLALLPTMPTISVLTA, and VLLLLTILELAVAMIQAYVFV.

This sequence belongs to the ATPase A chain family. In terms of assembly, component of the ATP synthase complex composed at least of ATP5F1A/subunit alpha, ATP5F1B/subunit beta, ATP5MC1/subunit c (homooctomer), MT-ATP6/subunit a, MT-ATP8/subunit 8, ATP5ME/subunit e, ATP5MF/subunit f, ATP5MG/subunit g, ATP5MK/subunit k, ATP5MJ/subunit j, ATP5F1C/subunit gamma, ATP5F1D/subunit delta, ATP5F1E/subunit epsilon, ATP5PF/subunit F6, ATP5PB/subunit b, ATP5PD/subunit d, ATP5PO/subunit OSCP. ATP synthase complex consists of a soluble F(1) head domain (subunits alpha(3) and beta(3)) - the catalytic core - and a membrane F(0) domain - the membrane proton channel (subunits c, a, 8, e, f, g, k and j). These two domains are linked by a central stalk (subunits gamma, delta, and epsilon) rotating inside the F1 region and a stationary peripheral stalk (subunits F6, b, d, and OSCP). Interacts with DNAJC30; interaction is direct.

It is found in the mitochondrion inner membrane. The enzyme catalyses H(+)(in) = H(+)(out). Subunit a, of the mitochondrial membrane ATP synthase complex (F(1)F(0) ATP synthase or Complex V) that produces ATP from ADP in the presence of a proton gradient across the membrane which is generated by electron transport complexes of the respiratory chain. ATP synthase complex consist of a soluble F(1) head domain - the catalytic core - and a membrane F(1) domain - the membrane proton channel. These two domains are linked by a central stalk rotating inside the F(1) region and a stationary peripheral stalk. During catalysis, ATP synthesis in the catalytic domain of F(1) is coupled via a rotary mechanism of the central stalk subunits to proton translocation. With the subunit c (ATP5MC1), forms the proton-conducting channel in the F(0) domain, that contains two crucial half-channels (inlet and outlet) that facilitate proton movement from the mitochondrial intermembrane space (IMS) into the matrix. Protons are taken up via the inlet half-channel and released through the outlet half-channel, following a Grotthuss mechanism. The protein is ATP synthase F(0) complex subunit a of Struthio camelus (Common ostrich).